Here is a 450-residue protein sequence, read N- to C-terminus: Phosphoglucosamine mutase (450 aa).

The active-site Phosphoserine intermediate is the Ser-101. Positions 101, 240, 242, and 244 each coordinate Mg(2+). Phosphoserine is present on Ser-101.

It belongs to the phosphohexose mutase family. Mg(2+) is required as a cofactor. In terms of processing, activated by phosphorylation. Phosphorylated by StkP in vivo.

It carries out the reaction alpha-D-glucosamine 1-phosphate = D-glucosamine 6-phosphate. In terms of biological role, catalyzes the conversion of glucosamine-6-phosphate to glucosamine-1-phosphate. This Streptococcus pneumoniae (strain ATCC BAA-255 / R6) protein is Phosphoglucosamine mutase.